A 534-amino-acid polypeptide reads, in one-letter code: MTIGSLGSTEFALHGKPAIRWGDLPQRVGKPETRRYQKVLLLNPSATLFRHDLPRCTYPLGLGYIAAVLEKYGYEVKILDVFAEGYYNAQPVDGDDQFLRYGLSDDDIVKVMKEFGPDVVGISSIFSNQADNVHHLLKLADLVTPEAVTAIGGAHARYFPKACLDDPNLDAVFLGEGEMTFLLWMEHLNGNVSDDEVHGIAWRDRDGKVQIKPELPLISSMRPEGPETGKSSPMLSMAGELDHIPFPAWHHYNMEKYFEIKAYQSPYTVGSRVGQLYTSRGCTAHCTFCTTTHFWGQKLRRRSVQDVVDEVLRLRDEYGIDEFHIQDDNITNDMDHARELFRAFKEVGLPWATPQGTALWRMDEELLDLMAESGAYQVTFAIESGVQRVLKELIKKPLNLERTSHLIKYARSLGMHVHGFFIIGMPPMCGNAGESIEEMQASYDYAEEAGFSSASFFAASPIVGSELLRECIRQGFVDPEESLYRMTYKQGIINVPGLWDGEEIAELAAKFNRDFNARRDRAYTPQKQWNANQY.

Positions Lys38 to Asp195 constitute a B12-binding domain. The Radical SAM core domain occupies Thr268 to Pro496. [4Fe-4S] cluster is bound by residues Cys282, Cys286, and Cys289.

Belongs to the radical SAM superfamily. The cofactor is [4Fe-4S] cluster. It depends on methylcob(III)alamin as a cofactor.

It catalyses the reaction cytidine 5'-{[hydroxy(2-hydroxyethyl)phosphonoyl]phosphate} + AH2 + 2 S-adenosyl-L-methionine = cytidine 5'-({hydroxy[(S)-2-hydroxypropyl]phosphonoyl}phosphate) + 5'-deoxyadenosine + L-methionine + A + S-adenosyl-L-homocysteine + 2 H(+). Its pathway is antibiotic biosynthesis; fosfomycin biosynthesis. Its function is as follows. Involved in fosfomycin biosynthesis. Catalyzes the C-methylation of cytidylyl-2-hydroxyethylphosphonate (HEP-CMP) to form cytidylyl-2-hydroxypropylphosphonate (HPP-CMP). The C-methylation is not stereoselective and the ratio of (S)- to (R)-HPP-CMP is almost equal in vitro. This is Cytidylyl-2-hydroxyethylphosphonate methyltransferase from Streptomyces wedmorensis.